A 590-amino-acid chain; its full sequence is Arginine--tRNA ligase (590 aa).

Positions 130 to 140 (PNIAKEMHVGH) match the 'HIGH' region motif.

It belongs to the class-I aminoacyl-tRNA synthetase family. As to quaternary structure, monomer.

The protein resides in the cytoplasm. It carries out the reaction tRNA(Arg) + L-arginine + ATP = L-arginyl-tRNA(Arg) + AMP + diphosphate. The chain is Arginine--tRNA ligase from Synechococcus sp. (strain CC9311).